The sequence spans 449 residues: Bifunctional protein GlmU (449 aa).

A pyrophosphorylase region spans residues 1-226 (MVAVAILAAG…FQEISGINDR (226 aa)). UDP-N-acetyl-alpha-D-glucosamine is bound by residues 7 to 10 (LAAG), lysine 21, glutamine 73, and 78 to 79 (GT). Position 103 (aspartate 103) interacts with Mg(2+). Positions 140, 155, 170, and 224 each coordinate UDP-N-acetyl-alpha-D-glucosamine. Asparagine 224 provides a ligand contact to Mg(2+). The linker stretch occupies residues 227-247 (FQLSAAYEILQDRIKEKWMKA). Positions 248-449 (GVMIHQPDTV…KEIKGWRLQS (202 aa)) are N-acetyltransferase. Residues arginine 329 and lysine 347 each coordinate UDP-N-acetyl-alpha-D-glucosamine. The active-site Proton acceptor is histidine 359. UDP-N-acetyl-alpha-D-glucosamine contacts are provided by tyrosine 362 and asparagine 373. Residues alanine 376, 382–383 (NY), alanine 419, and arginine 436 contribute to the acetyl-CoA site.

It in the N-terminal section; belongs to the N-acetylglucosamine-1-phosphate uridyltransferase family. The protein in the C-terminal section; belongs to the transferase hexapeptide repeat family. As to quaternary structure, homotrimer. Mg(2+) is required as a cofactor.

Its subcellular location is the cytoplasm. It catalyses the reaction alpha-D-glucosamine 1-phosphate + acetyl-CoA = N-acetyl-alpha-D-glucosamine 1-phosphate + CoA + H(+). The catalysed reaction is N-acetyl-alpha-D-glucosamine 1-phosphate + UTP + H(+) = UDP-N-acetyl-alpha-D-glucosamine + diphosphate. It functions in the pathway nucleotide-sugar biosynthesis; UDP-N-acetyl-alpha-D-glucosamine biosynthesis; N-acetyl-alpha-D-glucosamine 1-phosphate from alpha-D-glucosamine 6-phosphate (route II): step 2/2. Its pathway is nucleotide-sugar biosynthesis; UDP-N-acetyl-alpha-D-glucosamine biosynthesis; UDP-N-acetyl-alpha-D-glucosamine from N-acetyl-alpha-D-glucosamine 1-phosphate: step 1/1. It participates in bacterial outer membrane biogenesis; LPS lipid A biosynthesis. Functionally, catalyzes the last two sequential reactions in the de novo biosynthetic pathway for UDP-N-acetylglucosamine (UDP-GlcNAc). The C-terminal domain catalyzes the transfer of acetyl group from acetyl coenzyme A to glucosamine-1-phosphate (GlcN-1-P) to produce N-acetylglucosamine-1-phosphate (GlcNAc-1-P), which is converted into UDP-GlcNAc by the transfer of uridine 5-monophosphate (from uridine 5-triphosphate), a reaction catalyzed by the N-terminal domain. The polypeptide is Bifunctional protein GlmU (Picosynechococcus sp. (strain ATCC 27264 / PCC 7002 / PR-6) (Agmenellum quadruplicatum)).